Consider the following 374-residue polypeptide: Palmitoyltransferase PFA5 (374 aa).

Residues 1–13 (MALSWNIRIRRRS) are Cytoplasmic-facing. A helical membrane pass occupies residues 14-34 (WFRFILPIIVLGLLCYGTWAY). The Lumenal portion of the chain corresponds to 35–55 (CHKLCYEQVDKRLRQKSVSVG). A helical membrane pass occupies residues 56–76 (LICAVCFLDVVVIFIWLQIVI). The Cytoplasmic portion of the chain corresponds to 77 to 173 (LVGPGTQPHV…TVIGRDNYRL (97 aa)). The 51-residue stretch at 129-179 (IWCSECQSLKMERTHHSSELGHCIPRFDHYCMWIGTVIGRDNYRLFVQFAA) folds into the DHHC domain. A helical transmembrane segment spans residues 174-194 (FVQFAAYFSTLLLIMWVSICV). Residues 195–217 (YIRIITQHNHNYSPNLNANIIST) are Lumenal-facing. The helical transmembrane segment at 218–238 (LVFAILGWLLTASLLASSIFY) threads the bilayer. Residues 239–374 (MSQNKTSLEA…ASGDDSDPAY (136 aa)) are Cytoplasmic-facing.

This sequence belongs to the DHHC palmitoyltransferase family. PFA5 subfamily. In terms of processing, autopalmitoylated.

It localises to the membrane. It catalyses the reaction L-cysteinyl-[protein] + hexadecanoyl-CoA = S-hexadecanoyl-L-cysteinyl-[protein] + CoA. This chain is Palmitoyltransferase PFA5 (PFA5), found in Saccharomyces cerevisiae (strain ATCC 204508 / S288c) (Baker's yeast).